A 48-amino-acid polypeptide reads, in one-letter code: Small, acid-soluble spore protein O (48 aa).

Positions 1 to 48 (MAKRKANHVINGMNNAKRQGNGAGYIENDQHILTEAERQNNKKRKTNQ) are disordered. Over residues 28 to 40 (NDQHILTEAERQN) the composition is skewed to basic and acidic residues.

It belongs to the SspO family.

Its subcellular location is the spore core. This is Small, acid-soluble spore protein O from Bacillus licheniformis (strain ATCC 14580 / DSM 13 / JCM 2505 / CCUG 7422 / NBRC 12200 / NCIMB 9375 / NCTC 10341 / NRRL NRS-1264 / Gibson 46).